Consider the following 389-residue polypeptide: Monomeric sarcosine oxidase (389 aa).

An FAD-binding site is contributed by 8–38; sequence DVIVVGAGSMGMAAGYYLSKQGVKTLLVDSF. Cys318 carries the post-translational modification S-8alpha-FAD cysteine.

Belongs to the MSOX/MTOX family. MSOX subfamily. As to quaternary structure, monomer. Requires FAD as cofactor.

It localises to the cytoplasm. The enzyme catalyses sarcosine + O2 + H2O = formaldehyde + glycine + H2O2. Its function is as follows. Catalyzes the oxidative demethylation of sarcosine. In Arthrobacter sp. (strain TE1826), this protein is Monomeric sarcosine oxidase (soxA).